We begin with the raw amino-acid sequence, 308 residues long: Mycothiol acetyltransferase (308 aa).

A 1D-myo-inositol 2-(L-cysteinylamino)-2-deoxy-alpha-D-glucopyranoside-binding site is contributed by glutamate 44. 83 to 85 (AVV) is a binding site for acetyl-CoA. The N-acetyltransferase domain maps to 161–308 (VRLRTYAGSA…DVAYGRPEGD (148 aa)). Glutamate 188, lysine 230, and glutamate 238 together coordinate 1D-myo-inositol 2-(L-cysteinylamino)-2-deoxy-alpha-D-glucopyranoside. Acetyl-CoA-binding positions include 242 to 244 (VGV) and 249 to 255 (QGRGLGR). Tyrosine 276 contacts 1D-myo-inositol 2-(L-cysteinylamino)-2-deoxy-alpha-D-glucopyranoside. An acetyl-CoA-binding site is contributed by 281-286 (NTAALH).

The protein belongs to the acetyltransferase family. MshD subfamily. In terms of assembly, monomer.

The catalysed reaction is 1D-myo-inositol 2-(L-cysteinylamino)-2-deoxy-alpha-D-glucopyranoside + acetyl-CoA = mycothiol + CoA + H(+). Catalyzes the transfer of acetyl from acetyl-CoA to desacetylmycothiol (Cys-GlcN-Ins) to form mycothiol. The protein is Mycothiol acetyltransferase of Gordonia bronchialis (strain ATCC 25592 / DSM 43247 / BCRC 13721 / JCM 3198 / KCTC 3076 / NBRC 16047 / NCTC 10667) (Rhodococcus bronchialis).